The chain runs to 141 residues: D-aminoacyl-tRNA deacylase (141 aa).

The Gly-cisPro motif, important for rejection of L-amino acids motif lies at 133 to 134; the sequence is GP.

Belongs to the DTD family. Homodimer.

It is found in the cytoplasm. It catalyses the reaction glycyl-tRNA(Ala) + H2O = tRNA(Ala) + glycine + H(+). The enzyme catalyses a D-aminoacyl-tRNA + H2O = a tRNA + a D-alpha-amino acid + H(+). In terms of biological role, an aminoacyl-tRNA editing enzyme that deacylates mischarged D-aminoacyl-tRNAs. Also deacylates mischarged glycyl-tRNA(Ala), protecting cells against glycine mischarging by AlaRS. Acts via tRNA-based rather than protein-based catalysis; rejects L-amino acids rather than detecting D-amino acids in the active site. By recycling D-aminoacyl-tRNA to D-amino acids and free tRNA molecules, this enzyme counteracts the toxicity associated with the formation of D-aminoacyl-tRNA entities in vivo and helps enforce protein L-homochirality. This Streptomyces coelicolor (strain ATCC BAA-471 / A3(2) / M145) protein is D-aminoacyl-tRNA deacylase.